A 373-amino-acid polypeptide reads, in one-letter code: Probable ethanolamine permease EutH (373 aa).

10 consecutive transmembrane segments (helical) span residues 5–25 (EIII…KIIG), 38–58 (IMAM…APVL), 61–81 (ILSP…AMFA), 111–131 (ILGS…LGII), 143–163 (VLSG…VAGF), 166–186 (IMIF…MLGL), 197–217 (FTIF…AGAI), 236–256 (IEIV…VFVI), 307–327 (VAFA…TAGV), and 331–351 (MIFP…AVGI).

It belongs to the EutH family.

The protein resides in the cell membrane. It catalyses the reaction ethanolamine(in) = ethanolamine(out). In terms of biological role, probably involved in the diffusion of protonated ethanolamine (EA) into the cell at low pH. At low pH most EA is protonated, and this permease becomes necessary. Contributes to bacterial survival and replication in acidic macrophage vacuoles, but not to bacterial uptake by macrophages. The sequence is that of Probable ethanolamine permease EutH from Listeria monocytogenes serotype 1/2a (strain 10403S).